The sequence spans 387 residues: Ferrochelatase (387 aa).

The Fe cation site is built by H196 and E277.

This sequence belongs to the ferrochelatase family.

Its subcellular location is the cytoplasm. It carries out the reaction heme b + 2 H(+) = protoporphyrin IX + Fe(2+). It functions in the pathway porphyrin-containing compound metabolism; protoheme biosynthesis; protoheme from protoporphyrin-IX: step 1/1. In terms of biological role, catalyzes the ferrous insertion into protoporphyrin IX. The protein is Ferrochelatase of Gloeothece citriformis (strain PCC 7424) (Cyanothece sp. (strain PCC 7424)).